The sequence spans 402 residues: MITMKHVILVGDGMADYPLDELDGKTPLQVADKPNMDQLAGMGACGLLRTVPEGMEAGSDVANLSIMGYDPRRYYTGRGPLEAASIGVELGDDDVAFRCNLINADERIVDFNAGHIETAEASSLIDALNHELETRGRFYAGVSYRNLFVIEGRGYTSVRVEPPHDIVGESVAAHLPSGSEEADHIRELMLESAGVLRSHEVNLKRESMGKRPATMIWLWGQGLRPSMEPFSERYGIRGATITAVDLIKGLGVYAGLENIHVPGATGYLDTDYRAKGRYAAGALEEYDFLYVHVEAPDEAGHAGDAEEKIRAIENIDRFVLGRLLDALSDHEHRIAVLPDHPTPIEIRTHVPDPVPCILAGDGVDADQVKSYDEFTVREGSLGTWEAHRLMEIMMDPAARLRQ.

The protein belongs to the BPG-independent phosphoglycerate mutase family. A-PGAM subfamily.

It carries out the reaction (2R)-2-phosphoglycerate = (2R)-3-phosphoglycerate. It functions in the pathway carbohydrate degradation; glycolysis; pyruvate from D-glyceraldehyde 3-phosphate: step 3/5. Its function is as follows. Catalyzes the interconversion of 2-phosphoglycerate and 3-phosphoglycerate. The chain is 2,3-bisphosphoglycerate-independent phosphoglycerate mutase 2 (apgM2) from Methanothermobacter thermautotrophicus (strain ATCC 29096 / DSM 1053 / JCM 10044 / NBRC 100330 / Delta H) (Methanobacterium thermoautotrophicum).